The chain runs to 451 residues: Golgi reassembly-stacking protein 2 (451 aa).

Residue glycine 2 is the site of N-myristoyl glycine attachment. 2 consecutive PDZ GRASP-type domains span residues glutamate 15 to phenylalanine 105 and asparagine 111 to leucine 199. Residues glutamate 15–leucine 215 are GRASP. 2 positions are modified to dimethylated arginine: arginine 30 and arginine 47. An important for membrane binding region spans residues isoleucine 194 to leucine 199. Serine 214 bears the Phosphoserine mark. Threonine 222 is subject to Phosphothreonine. Threonine 225 bears the Phosphothreonine; by MAPK mark. Over residues leucine 236 to valine 252 the composition is skewed to low complexity. Disordered regions lie at residues leucine 236 to serine 255 and glutamate 377 to serine 451. Polar residues predominate over residues serine 410–proline 424. The residue at position 411 (serine 411) is a Phosphoserine. Residues threonine 417 and threonine 435 each carry the phosphothreonine modification. A phosphoserine mark is found at serine 443 and serine 448.

The protein belongs to the GORASP family. In terms of assembly, homodimer. Homooligomer. ER stress induces phosphorylation-dependent monomerization. Interacts with BLZF1/Golgin 45. Identified in a complex with RAB2 and GORASP2. Interacts with JAM2 and JAM3. Interacts with members of the p24 cargo receptors. Interacts with CNIH and the cytoplasmic domain of transmembrane TGFA, prior its transit in the trans-Golgi. Interacts with KCTD5. Interacts with TMED2 and TMED3. Interacts with SEC16A in response to ER stress. Interacts (via PDZ GRASP-type 1 domain) with core-glycosylated CFTR in response to ER stress. In terms of processing, myristoylated. Myristoylation is essential for the Golgi targeting. Palmitoylated. Post-translationally, phosphorylated in mitotic cells. ER stress-induced phosphorylation at Ser-443 induces monomerization and subsequent relocalization from Golgi to ER which is essential for mediating unconventional (ER/Golgi-independent) trafficking of CFTR to the cell membrane. Detected in lung, heart and testis. Colocalized in a polarized fashion in the acrosome region with JAM3 in round spermatids (at protein level).

The protein resides in the golgi apparatus membrane. It localises to the endoplasmic reticulum membrane. It is found in the golgi apparatus. Its function is as follows. Key structural protein of the Golgi apparatus. The membrane cisternae of the Golgi apparatus adhere to each other to form stacks, which are aligned side by side to form the Golgi ribbon. Acting in concert with GORASP1/GRASP65, is required for the formation and maintenance of the Golgi ribbon, and may be dispensable for the formation of stacks. However, other studies suggest that GORASP2 plays a role in assembly and membrane stacking of the Golgi cisternae, and in the process by which Golgi stacks reform after breakdown during mitosis and meiosis. May regulate the intracellular transport and presentation of a defined set of transmembrane proteins, such as transmembrane TGFA. Required for normal acrosome formation during spermiogenesis and normal male fertility, probably by promoting colocalization of JAM2 and JAM3 at contact sites between germ cells and Sertoli cells. Mediates ER stress-induced unconventional (ER/Golgi-independent) trafficking of core-glycosylated CFTR to cell membrane. The protein is Golgi reassembly-stacking protein 2 (Gorasp2) of Mus musculus (Mouse).